Consider the following 531-residue polypeptide: Transporter mfs1 (531 aa).

A run of 10 helical transmembrane segments spans residues 83 to 103 (LVVT…SAIF), 119 to 139 (VPVI…PLIF), 158 to 178 (LIVF…GVLL), 182 to 202 (FLAG…LADI), 214 to 234 (FWSL…AAMV), 241 to 261 (WQFW…TFFM), 325 to 345 (IYIG…PILF), 358 to 378 (LVYM…FIYL), 398 to 418 (ILII…WFGW), and 424 to 444 (VHWI…FLLF). N-linked (GlcNAc...) asparagine glycosylation occurs at Asn486. Residues 496-516 (GWGSTILGVISCIMIPIPFLI) form a helical membrane-spanning segment.

This sequence belongs to the major facilitator superfamily. CAR1 family.

Its subcellular location is the endoplasmic reticulum. It is found in the membrane. In Schizosaccharomyces pombe (strain 972 / ATCC 24843) (Fission yeast), this protein is Transporter mfs1 (mfs1).